We begin with the raw amino-acid sequence, 314 residues long: E3 ubiquitin-protein ligase SINA-like 11 (314 aa).

The span at 1-12 shows a compositional bias: polar residues; it reads MEDSNSHPQNQT. The interval 1-31 is disordered; sequence MEDSNSHPQNQTSKRKSSHPQKKQRMENETR. A compositionally biased stretch (basic residues) spans 13–23; that stretch reads SKRKSSHPQKK. Residues 43–81 form an RING-type; degenerate zinc finger; that stretch reads CPVCFEPLTIPTFQCDDGHIVCNFCFAKVSNKCPGPGCD. The tract at residues 95–280 is SBD; that stretch reads VLESAFVPCQ…PANEVQQVTI (186 aa). The SIAH-type zinc finger occupies 98–156; the sequence is SAFVPCQNTEFGCTKSVSYEKVSSHEKECNYSQCSCPNLECNYTGSYNIIYGHFMRRHL. Positions 103, 110, 122, 126, 133, 138, 150, and 155 each coordinate Zn(2+).

It belongs to the SINA (Seven in absentia) family.

It carries out the reaction S-ubiquitinyl-[E2 ubiquitin-conjugating enzyme]-L-cysteine + [acceptor protein]-L-lysine = [E2 ubiquitin-conjugating enzyme]-L-cysteine + N(6)-ubiquitinyl-[acceptor protein]-L-lysine.. Its pathway is protein modification; protein ubiquitination. Its function is as follows. E3 ubiquitin-protein ligase that mediates ubiquitination and subsequent proteasomal degradation of target proteins. E3 ubiquitin ligases accept ubiquitin from an E2 ubiquitin-conjugating enzyme in the form of a thioester and then directly transfers the ubiquitin to targeted substrates. It probably triggers the ubiquitin-mediated degradation of different substrates. The protein is E3 ubiquitin-protein ligase SINA-like 11 of Arabidopsis thaliana (Mouse-ear cress).